The primary structure comprises 359 residues: Phosphate acyltransferase (359 aa).

Residues 338–359 form a disordered region; it reads LEGAAGRAARPPPPRRASSHDA.

The protein belongs to the PlsX family. Homodimer. Probably interacts with PlsY.

The protein resides in the cytoplasm. The enzyme catalyses a fatty acyl-[ACP] + phosphate = an acyl phosphate + holo-[ACP]. Its pathway is lipid metabolism; phospholipid metabolism. In terms of biological role, catalyzes the reversible formation of acyl-phosphate (acyl-PO(4)) from acyl-[acyl-carrier-protein] (acyl-ACP). This enzyme utilizes acyl-ACP as fatty acyl donor, but not acyl-CoA. The sequence is that of Phosphate acyltransferase from Anaeromyxobacter sp. (strain Fw109-5).